We begin with the raw amino-acid sequence, 196 residues long: Cell division protein SepF (196 aa).

The segment at 15–80 is disordered; that stretch reads VEDDEEFNEP…PKRSASTFSK (66 aa). Residues 57 to 72 show a composition bias toward low complexity; it reads PAQTTPKPQTQTAAPK.

The protein belongs to the SepF family. In terms of assembly, homodimer. Interacts with FtsZ.

It is found in the cytoplasm. In terms of biological role, cell division protein that is part of the divisome complex and is recruited early to the Z-ring. Probably stimulates Z-ring formation, perhaps through the cross-linking of FtsZ protofilaments. Its function overlaps with FtsA. This chain is Cell division protein SepF, found in Lactococcus lactis subsp. cremoris (strain MG1363).